The sequence spans 356 residues: MTARTLLVMAGGTGGHVFPGLAVARALRDEGWRVVWLGNRTGMEATLVPKHDIPMEYIQFGGLRGKGLLTKLLLPLNLLRAFWQSIGALRRVKPDVVLGMGGYITFPAGMMASLLGRPLVLHEQNSIAGLANKVLAKVADRVLCAFPDALPNSEWTGNPVRAELAQIPAPESRYDHRAGPLHVLVVGGSLGAAALNDVVPKAIALLPEGQRPVVKHQAGAKQIDTLRANYAAAGVAGDTVPFIDDMAAAYADADLVICRAGAMTVSEVAAAGVAALFVPFPHAVDDHQTTNATFLSKQGAALLVQQNELTAEGLAKTLAGLSRTQLKDMARAARGLAKPEATRRVAEICSQLAGKS.

UDP-N-acetyl-alpha-D-glucosamine is bound by residues 13–15 (TGG), Asn-125, Arg-161, Ser-189, Ile-243, and Gln-288.

Belongs to the glycosyltransferase 28 family. MurG subfamily.

Its subcellular location is the cell inner membrane. It carries out the reaction di-trans,octa-cis-undecaprenyl diphospho-N-acetyl-alpha-D-muramoyl-L-alanyl-D-glutamyl-meso-2,6-diaminopimeloyl-D-alanyl-D-alanine + UDP-N-acetyl-alpha-D-glucosamine = di-trans,octa-cis-undecaprenyl diphospho-[N-acetyl-alpha-D-glucosaminyl-(1-&gt;4)]-N-acetyl-alpha-D-muramoyl-L-alanyl-D-glutamyl-meso-2,6-diaminopimeloyl-D-alanyl-D-alanine + UDP + H(+). It functions in the pathway cell wall biogenesis; peptidoglycan biosynthesis. Cell wall formation. Catalyzes the transfer of a GlcNAc subunit on undecaprenyl-pyrophosphoryl-MurNAc-pentapeptide (lipid intermediate I) to form undecaprenyl-pyrophosphoryl-MurNAc-(pentapeptide)GlcNAc (lipid intermediate II). The chain is UDP-N-acetylglucosamine--N-acetylmuramyl-(pentapeptide) pyrophosphoryl-undecaprenol N-acetylglucosamine transferase from Cupriavidus metallidurans (strain ATCC 43123 / DSM 2839 / NBRC 102507 / CH34) (Ralstonia metallidurans).